A 715-amino-acid polypeptide reads, in one-letter code: Palmitoyltransferase ZDHHC5 (715 aa).

At 1–13 (MPAESGKRFKPSK) the chain is on the cytoplasmic side. A helical transmembrane segment spans residues 14-34 (YVPVSAAAIFLVGATTLFFAF). The Extracellular segment spans residues 35 to 38 (TCPG). The chain crosses the membrane as a helical span at residues 39-59 (LSLYVSPAVPIYNAIMFLFVL). Over 60 to 148 (ANFSMATFMD…NCIGRRNYRY (89 aa)) the chain is Cytoplasmic. Tyr91 carries the post-translational modification Phosphotyrosine; by LYN. One can recognise a DHHC domain in the interval 104-154 (KWCATCRFYRPPRCSHCSVCDNCVEEFDHHCPWVNNCIGRRNYRYFFLFLL). The active-site S-palmitoyl cysteine intermediate is the Cys134. A helical transmembrane segment spans residues 149–169 (FFLFLLSLTAHIMGVFGFGLL). Over 170–191 (YVLYHIEELSGVRTAVTMAVMC) the chain is Extracellular. Residues 192-212 (VAGLFFIPVAGLTGFHVVLVA) traverse the membrane as a helical segment. The Cytoplasmic segment spans residues 213 to 715 (RGRTTNEQVT…VGGTTYEISV (503 aa)). Residue Ser247 is modified to Phosphoserine. A disordered region spans residues 289-715 (GELRRTKSKG…VGGTTYEISV (427 aa)). At Thr294 the chain carries Phosphothreonine. A phosphoserine mark is found at Ser296 and Ser299. Thr303 carries the post-translational modification Phosphothreonine. Ser345 carries the post-translational modification Phosphoserine. Residues Thr348 and Thr350 each carry the phosphothreonine modification. Residues 359-373 (SSSSTSAAMPHSSSA) show a composition bias toward low complexity. Phosphoserine is present on residues Ser380, Ser398, Ser406, and Ser409. The residue at position 411 (Thr411) is a Phosphothreonine. Phosphoserine occurs at positions 415, 425, 429, and 432. Over residues 422–432 (SSGSRSSSLKS) the composition is skewed to low complexity. A Phosphothreonine modification is found at Thr436. A compositionally biased stretch (polar residues) spans 442 to 478 (QLQSIRSEGTTSTSYKSLANQTRNGSLSYDSLLTPSD). Residue Ser529 is modified to Phosphoserine. A Phosphotyrosine; by FYN modification is found at Tyr533. Residue Ser554 is modified to Phosphoserine. The residue at position 617 (Arg617) is an Omega-N-methylarginine. At Ser621 the chain carries Phosphoserine. Thr659 carries the post-translational modification Phosphothreonine. The segment covering 666–677 (LKTTYSKSNGQP) has biased composition (polar residues). Residues Ser684 and Ser694 each carry the phosphoserine modification. Arg697 is modified (omega-N-methylarginine).

It belongs to the DHHC palmitoyltransferase family. ERF2/ZDHHC9 subfamily. In terms of processing, phosphorylation regulates association with endocytic proteins and its subcellular localization. Phosphorylation by LYN during fatty acid uptake leads to inactivation of the activity. Post-translationally, autopalmitoylated. Palmitoylation of the C-terminal tail regulates stimulation-dependent plasma membrane motility.

It is found in the cell membrane. The protein resides in the synapse. The catalysed reaction is L-cysteinyl-[protein] + hexadecanoyl-CoA = S-hexadecanoyl-L-cysteinyl-[protein] + CoA. Its function is as follows. Palmitoyltransferase that catalyzes the addition of palmitate onto various protein substrates such as CTNND2, CD36, GSDMD, NLRP3, NOD1, NOD2, STAT3 and S1PR1 thus plays a role in various biological processes including cell adhesion, inflammation, fatty acid uptake, bacterial sensing or cardiac functions. Plays an important role in the regulation of synapse efficacy by mediating palmitoylation of delta-catenin/CTNND2, thereby increasing synaptic delivery and surface stabilization of alpha-amino-3-hydroxy-5-methyl-4-isoxazole propionic acid receptors (AMPARs). Under basal conditions, remains at the synaptic membrane through FYN-mediated phosphorylation that prevents association with endocytic proteins. Neuronal activity enhances the internalization and trafficking of DHHC5 from spines to dendritic shafts where it palmitoylates delta-catenin/CTNND2. Regulates cell adhesion at the plasma membrane by palmitoylating GOLGA7B and DSG2. Plays a role in innate immune response by mediating the palmitoylation of NOD1 and NOD2 and their proper recruitment to the bacterial entry site and phagosomes. Also participates in fatty acid uptake by palmitoylating CD36 and thereby targeting it to the plasma membrane. Upon binding of fatty acids to CD36, gets phosphorylated by LYN leading to inactivation and subsequent CD36 caveolar endocytosis. Controls oligodendrocyte development by catalyzing STAT3 palmitoylation. Acts as a regulator of inflammatory response by mediating palmitoylation of NLRP3 and GSDMD. Palmitoylates NLRP3 to promote inflammasome assembly and activation. Activates pyroptosis by catalyzing palmitoylation of gasdermin-D (GSDMD), thereby promoting membrane translocation and pore formation of GSDMD. The polypeptide is Palmitoyltransferase ZDHHC5 (Homo sapiens (Human)).